The chain runs to 189 residues: Interferon alpha-6 (189 aa).

The N-terminal stretch at 1-20 is a signal peptide; sequence MALPFALLMALVVLSCKSSC. 2 disulfides stabilise this stretch: Cys24–Cys122 and Cys52–Cys162.

This sequence belongs to the alpha/beta interferon family.

It is found in the secreted. Produced by macrophages, IFN-alpha have antiviral activities. Interferon stimulates the production of two enzymes: a protein kinase and an oligoadenylate synthetase. The sequence is that of Interferon alpha-6 (IFNA6) from Homo sapiens (Human).